The chain runs to 440 residues: Adenylyltransferase and sulfurtransferase UBA4 (440 aa).

At Met-1 the chain carries N-acetylmethionine. Residues Gly-77, Asp-98, 105 to 109, Lys-122, and 166 to 167 contribute to the ATP site; these read SNLHR and DS. 2 residues coordinate Zn(2+): Cys-208 and Cys-211. Cys-225 acts as the Glycyl thioester intermediate; for adenylyltransferase activity in catalysis. Zn(2+)-binding residues include Cys-286 and Cys-289. Ser-326 carries the phosphoserine modification. The Rhodanese domain maps to 339 to 438; sequence FLAKHIFLDV…YIDDIDQTIP (100 aa). Catalysis depends on Cys-397, which acts as the Cysteine persulfide intermediate; for sulfurtransferase activity.

It in the N-terminal section; belongs to the HesA/MoeB/ThiF family. UBA4 subfamily. It depends on Zn(2+) as a cofactor.

It is found in the cytoplasm. The protein localises to the cytosol. It functions in the pathway tRNA modification; 5-methoxycarbonylmethyl-2-thiouridine-tRNA biosynthesis. In terms of biological role, plays a central role in 2-thiolation of mcm(5)S(2)U at tRNA wobble positions of cytosolic tRNA(Lys), tRNA(Glu) and tRNA(Gln). Acts by mediating the C-terminal thiocarboxylation of sulfur carrier URM1. Its N-terminus first activates URM1 as acyl-adenylate (-COAMP), then the persulfide sulfur on the catalytic cysteine is transferred to URM1 to form thiocarboxylation (-COSH) of its C-terminus. The reaction probably involves hydrogen sulfide that is generated from the persulfide intermediate and that acts as a nucleophile towards URM1. Subsequently, a transient disulfide bond is formed. Does not use thiosulfate as sulfur donor; NFS1 probably acting as a sulfur donor for thiocarboxylation reactions. Prior mcm(5) tRNA modification by the elongator complex is required for 2-thiolation. May also be involved in protein urmylation. The polypeptide is Adenylyltransferase and sulfurtransferase UBA4 (Saccharomyces cerevisiae (strain RM11-1a) (Baker's yeast)).